The chain runs to 490 residues: Aspartyl aminopeptidase 4 (490 aa).

His-97 provides a ligand contact to Zn(2+). His-173 contributes to the substrate binding site. 4 residues coordinate Zn(2+): Asp-273, Glu-308, Glu-309, and Asp-362. Position 308 (Glu-308) interacts with substrate. Substrate contacts are provided by Asp-362, His-365, Lys-390, and Tyr-397. His-456 serves as a coordination point for Zn(2+).

The protein belongs to the peptidase M18 family. Tetrahedron-shaped homododecamer built from six homodimers. Zn(2+) is required as a cofactor.

The protein localises to the cytoplasm. It is found in the vacuole lumen. It catalyses the reaction Release of an N-terminal aspartate or glutamate from a peptide, with a preference for aspartate.. Its activity is regulated as follows. The metalloproteases inhibitors EDTA and 1.10-phenanthroline both inhibit the activity, whereas bestatin, an inhibitor of most aminopeptidases, does not affect enzyme activity. In terms of biological role, aspartyl aminopeptidase that contributes to peptide degradation both in the cytosol and the vacuole. Cells may respond to environmental conditions by changing the distributions of the cytosolic enzyme to the vacuole when cells need more active vacuolar degradation. The chain is Aspartyl aminopeptidase 4 (APE4) from Saccharomyces cerevisiae (strain ATCC 204508 / S288c) (Baker's yeast).